Reading from the N-terminus, the 144-residue chain is Cell division protein SepF (144 aa).

Residues 21–38 (TDLQGTKTTDEVSPTSRP) show a composition bias toward polar residues. The segment at 21–40 (TDLQGTKTTDEVSPTSRPDN) is disordered.

It belongs to the SepF family. In terms of assembly, homodimer. Interacts with FtsZ.

The protein resides in the cytoplasm. Its function is as follows. Cell division protein that is part of the divisome complex and is recruited early to the Z-ring. Probably stimulates Z-ring formation, perhaps through the cross-linking of FtsZ protofilaments. Its function overlaps with FtsA. This chain is Cell division protein SepF, found in Latilactobacillus sakei subsp. sakei (strain 23K) (Lactobacillus sakei subsp. sakei).